The sequence spans 717 residues: Glycine--tRNA ligase beta subunit (717 aa).

Belongs to the class-II aminoacyl-tRNA synthetase family. As to quaternary structure, tetramer of two alpha and two beta subunits.

It localises to the cytoplasm. The catalysed reaction is tRNA(Gly) + glycine + ATP = glycyl-tRNA(Gly) + AMP + diphosphate. The polypeptide is Glycine--tRNA ligase beta subunit (Agrobacterium fabrum (strain C58 / ATCC 33970) (Agrobacterium tumefaciens (strain C58))).